A 346-amino-acid chain; its full sequence is Elongation factor Ts (346 aa).

Positions 80 to 83 are involved in Mg(2+) ion dislocation from EF-Tu; that stretch reads TDFV.

It belongs to the EF-Ts family.

The protein localises to the cytoplasm. Its function is as follows. Associates with the EF-Tu.GDP complex and induces the exchange of GDP to GTP. It remains bound to the aminoacyl-tRNA.EF-Tu.GTP complex up to the GTP hydrolysis stage on the ribosome. In Streptococcus pneumoniae (strain ATCC BAA-255 / R6), this protein is Elongation factor Ts (tsf).